Reading from the N-terminus, the 170-residue chain is Peptide deformylase (170 aa).

Fe cation-binding residues include Cys93 and His135. Glu136 is a catalytic residue. Position 139 (His139) interacts with Fe cation.

The protein belongs to the polypeptide deformylase family. Requires Fe(2+) as cofactor.

The enzyme catalyses N-terminal N-formyl-L-methionyl-[peptide] + H2O = N-terminal L-methionyl-[peptide] + formate. Functionally, removes the formyl group from the N-terminal Met of newly synthesized proteins. Requires at least a dipeptide for an efficient rate of reaction. N-terminal L-methionine is a prerequisite for activity but the enzyme has broad specificity at other positions. In Syntrophobacter fumaroxidans (strain DSM 10017 / MPOB), this protein is Peptide deformylase.